The sequence spans 1456 residues: ABC-type transporter eriD (1456 aa).

Residues 1–65 are disordered; the sequence is MAENEKVTYG…DPRMDPLSGK (65 aa). Residues 30–40 show a composition bias toward polar residues; the sequence is SMTNASRSSVY. The ABC transporter 1 domain occupies 118-372; that stretch reads LDIPGLARDI…FIDMGFECPP (255 aa). Transmembrane regions (helical) follow at residues 481 to 501, 515 to 535, 561 to 581, 590 to 610, 623 to 643, and 734 to 754; these read NFLT…SIFY, ALLF…ILQI, VLCD…VLYF, GAFF…SMIF, AMAP…FTIP, and ILFG…EFIA. Residues 775–799 are disordered; that stretch reads EGASEDEEAGTGSTGTRTQEEPVDK. In terms of domain architecture, ABC transporter 2 spans 813-1056; the sequence is FHWEDVIYDI…IIDYFEGQGA (244 aa). 849–856 is a binding site for ATP; it reads GASGAGKT. Helical transmembrane passes span 1148–1168, 1184–1204, 1233–1253, 1269–1289, 1301–1321, 1337–1357, and 1423–1443; these read YIYS…FSFF, VFMG…HFVT, LPWN…PVGM, LMFL…HMLI, IASL…GPSG, PFTY…PAFC, and FGFL…FYWL.

Belongs to the ABC transporter superfamily. ABCG family. PDR (TC 3.A.1.205) subfamily.

Its subcellular location is the membrane. ABC-type transporter; part of the gene cluster that mediates the biosynthesis of erinacines, cyathane-xylosides that show unique biological activities, including leishmanicidal activity, stimulating activity for nerve growth-factor synthesis, and agonistic activity toward the kappa opioid receptor. In Hericium erinaceus (Lion's mane mushroom), this protein is ABC-type transporter eriD.